The sequence spans 153 residues: Probable disulfide formation protein (153 aa).

A helical membrane pass occupies residues 4–23 (DTRLYLAWLVALAATLGSLY). Cysteines 33 and 36 form a disulfide. The next 2 helical transmembrane spans lie at 38–57 (AQRI…AFVG) and 64–81 (YVLP…FQNL). A disulfide bridge links Cys93 with Cys101. Residues 117–139 (RALTIPVLSMIAFALILALLSWP) traverse the membrane as a helical segment.

It belongs to the DsbB family. BdbC subfamily.

The protein localises to the cell membrane. Its function is as follows. Required for disulfide bond formation in some proteins. The sequence is that of Probable disulfide formation protein from Deinococcus radiodurans (strain ATCC 13939 / DSM 20539 / JCM 16871 / CCUG 27074 / LMG 4051 / NBRC 15346 / NCIMB 9279 / VKM B-1422 / R1).